Reading from the N-terminus, the 208-residue chain is Uracil phosphoribosyltransferase (208 aa).

5-phospho-alpha-D-ribose 1-diphosphate is bound by residues R78, R103, and 130 to 138; that span reads DPMLATGHS. Uracil-binding positions include I193 and 198-200; that span reads GDA. Residue D199 participates in 5-phospho-alpha-D-ribose 1-diphosphate binding.

Belongs to the UPRTase family. Mg(2+) serves as cofactor.

The catalysed reaction is UMP + diphosphate = 5-phospho-alpha-D-ribose 1-diphosphate + uracil. It functions in the pathway pyrimidine metabolism; UMP biosynthesis via salvage pathway; UMP from uracil: step 1/1. With respect to regulation, allosterically activated by GTP. In terms of biological role, catalyzes the conversion of uracil and 5-phospho-alpha-D-ribose 1-diphosphate (PRPP) to UMP and diphosphate. The chain is Uracil phosphoribosyltransferase from Brucella anthropi (strain ATCC 49188 / DSM 6882 / CCUG 24695 / JCM 21032 / LMG 3331 / NBRC 15819 / NCTC 12168 / Alc 37) (Ochrobactrum anthropi).